Consider the following 1053-residue polypeptide: Protein CLEC16A (1053 aa).

The 148-residue stretch at 51 to 198 (IRSITEILIW…AVRTITLNVY (148 aa)) folds into the FPL domain. Disordered regions lie at residues 375 to 434 (SLEM…GESE), 452 to 471 (STSV…AATC), and 892 to 983 (SSPS…SPSL). Over residues 381-392 (HKGKRRVQKRPN) the composition is skewed to basic residues. A compositionally biased stretch (low complexity) spans 892–938 (SSPSLSSQSPPSASGSPSGSGSTSHCDSGGTSSSSTPSTAQSPADAP).

This sequence belongs to the CLEC16A/gop-1 family. In terms of assembly, interacts with RNF41/NRDP1. Almost exclusively expressed in immune cells, including dendritic cells, B-lymphocytes and natural killer cells.

It is found in the endosome membrane. Its subcellular location is the lysosome membrane. Functionally, regulator of mitophagy through the upstream regulation of the RNF41/NRDP1-PRKN pathway. Mitophagy is a selective form of autophagy necessary for mitochondrial quality control. The RNF41/NRDP1-PRKN pathway regulates autophagosome-lysosome fusion during late mitophagy. May protect RNF41/NRDP1 from proteasomal degradation, RNF41/NRDP1 which regulates proteasomal degradation of PRKN. Plays a key role in beta cells functions by regulating mitophagy/autophagy and mitochondrial health. The protein is Protein CLEC16A of Homo sapiens (Human).